Reading from the N-terminus, the 578-residue chain is Isocitrate dehydrogenase kinase/phosphatase (578 aa).

Residues 315–321 and Lys336 contribute to the ATP site; that span reads APGIRGM. The active site involves Asp371.

This sequence belongs to the AceK family.

The protein localises to the cytoplasm. It carries out the reaction L-seryl-[isocitrate dehydrogenase] + ATP = O-phospho-L-seryl-[isocitrate dehydrogenase] + ADP + H(+). In terms of biological role, bifunctional enzyme which can phosphorylate or dephosphorylate isocitrate dehydrogenase (IDH) on a specific serine residue. This is a regulatory mechanism which enables bacteria to bypass the Krebs cycle via the glyoxylate shunt in response to the source of carbon. When bacteria are grown on glucose, IDH is fully active and unphosphorylated, but when grown on acetate or ethanol, the activity of IDH declines drastically concomitant with its phosphorylation. The protein is Isocitrate dehydrogenase kinase/phosphatase of Escherichia coli (strain K12 / MC4100 / BW2952).